Here is a 353-residue protein sequence, read N- to C-terminus: Protein RecA (353 aa).

67 to 74 (GPESSGKT) contacts ATP. Residues 330 to 353 (SNPNSTPDFSVDDSEGVAETNEDF) form a disordered region. Acidic residues predominate over residues 339 to 353 (SVDDSEGVAETNEDF).

This sequence belongs to the RecA family.

It is found in the cytoplasm. Functionally, can catalyze the hydrolysis of ATP in the presence of single-stranded DNA, the ATP-dependent uptake of single-stranded DNA by duplex DNA, and the ATP-dependent hybridization of homologous single-stranded DNAs. It interacts with LexA causing its activation and leading to its autocatalytic cleavage. This is Protein RecA from Escherichia coli O157:H7 (strain EC4115 / EHEC).